The sequence spans 206 residues: Small ribosomal subunit protein uS4 (206 aa).

An S4 RNA-binding domain is found at 96–156 (GRLDNVVYRM…EKSKKQARIK (61 aa)).

This sequence belongs to the universal ribosomal protein uS4 family. In terms of assembly, part of the 30S ribosomal subunit. Contacts protein S5. The interaction surface between S4 and S5 is involved in control of translational fidelity.

Its function is as follows. One of the primary rRNA binding proteins, it binds directly to 16S rRNA where it nucleates assembly of the body of the 30S subunit. Functionally, with S5 and S12 plays an important role in translational accuracy. The polypeptide is Small ribosomal subunit protein uS4 (Mannheimia succiniciproducens (strain KCTC 0769BP / MBEL55E)).